Reading from the N-terminus, the 362-residue chain is Protein-glutamate methylesterase/protein-glutamine glutaminase 1 (362 aa).

One can recognise a Response regulatory domain in the interval 10-127 (RVLVVDDSSF…ADAQRVFREE (118 aa)). Aspartate 61 carries the 4-aspartylphosphate modification. The 195-residue stretch at 163–357 (PRPSQALAGK…LPLTQIGSEI (195 aa)) folds into the CheB-type methylesterase domain. Catalysis depends on residues serine 181, histidine 208, and aspartate 306.

This sequence belongs to the CheB family. Post-translationally, phosphorylated by CheA. Phosphorylation of the N-terminal regulatory domain activates the methylesterase activity.

It localises to the cytoplasm. It carries out the reaction [protein]-L-glutamate 5-O-methyl ester + H2O = L-glutamyl-[protein] + methanol + H(+). The enzyme catalyses L-glutaminyl-[protein] + H2O = L-glutamyl-[protein] + NH4(+). In terms of biological role, involved in chemotaxis. Part of a chemotaxis signal transduction system that modulates chemotaxis in response to various stimuli. Catalyzes the demethylation of specific methylglutamate residues introduced into the chemoreceptors (methyl-accepting chemotaxis proteins or MCP) by CheR. Also mediates the irreversible deamidation of specific glutamine residues to glutamic acid. The protein is Protein-glutamate methylesterase/protein-glutamine glutaminase 1 of Geobacter sulfurreducens (strain ATCC 51573 / DSM 12127 / PCA).